A 230-amino-acid polypeptide reads, in one-letter code: Porin OmpL (230 aa).

A signal peptide spans 1 to 20 (MKKINAIILLSSLTSASVFA).

Belongs to the oligogalacturonate-specific porin KdgM (TC 1.B.35) family. OmpL subfamily.

It localises to the cell outer membrane. Functionally, outer membrane channel protein that allows an efficient diffusion of low-molecular-weight solutes such as small sugars and tetraglycine. However, the specific substrate recognized by the OmpL channel is unknown. The protein is Porin OmpL (ompL) of Escherichia coli (strain K12).